We begin with the raw amino-acid sequence, 311 residues long: Olfactory receptor 2M4 (311 aa).

The Extracellular portion of the chain corresponds to 1 to 25 (MVWENQTFNSIFILLGIFNHSPTHT). The N-linked (GlcNAc...) asparagine glycan is linked to Asn-5. The helical transmembrane segment at 26–49 (FLFSLVLGIFSLALMENISMVLLI) threads the bilayer. The Cytoplasmic segment spans residues 50–57 (YIEKQLHT). Residues 58–79 (PMYFLLSQLSLMDLMLICTTLP) form a helical membrane-spanning segment. Residues 80–100 (KMIFSYLSGKKSISLAGCGTQ) lie on the Extracellular side of the membrane. The cysteines at positions 97 and 189 are disulfide-linked. A helical membrane pass occupies residues 101-120 (IFFYVSLLGAECFLLAVMAY). Residues 121–139 (DRYVAICHPLQYTILMNPK) lie on the Cytoplasmic side of the membrane. A helical membrane pass occupies residues 140–158 (LCVFMTVASWTLGSLDGII). Over 159–195 (VLAAVLSFSYCSSLEIHHFFCDVAALLPLSCTETSAF) the chain is Extracellular. A helical transmembrane segment spans residues 196–219 (ERLLVICCVVMLIFPVSVIILSYS). Residues 220 to 236 (HVLRAVIHMGSGESRRK) lie on the Cytoplasmic side of the membrane. Residues 237–259 (AFTTCSSHLSVVGLYYGAAMFMY) traverse the membrane as a helical segment. Residues 260–272 (MRPASKHTPDQDK) are Extracellular-facing. Residues 273 to 292 (MVSAFYTILTPMLNPLIYSL) traverse the membrane as a helical segment. The Cytoplasmic segment spans residues 293-311 (RNKEVFRALQKVLKKRKLI).

The protein belongs to the G-protein coupled receptor 1 family.

The protein resides in the cell membrane. In terms of biological role, odorant receptor. The polypeptide is Olfactory receptor 2M4 (OR2M4) (Homo sapiens (Human)).